The primary structure comprises 229 residues: PKHD-type hydroxylase BBta_1313 (229 aa).

The 103-residue stretch at 78 to 180 (HIFPPLFNRY…RIASFFWLQS (103 aa)) folds into the Fe2OG dioxygenase domain. The Fe cation site is built by His-98, Asp-100, and His-161. Arg-171 contributes to the 2-oxoglutarate binding site.

It depends on Fe(2+) as a cofactor. L-ascorbate is required as a cofactor.

This Bradyrhizobium sp. (strain BTAi1 / ATCC BAA-1182) protein is PKHD-type hydroxylase BBta_1313.